The sequence spans 361 residues: Molybdenum import ATP-binding protein ModC (361 aa).

The ABC transporter domain occupies 1 to 228 (MLTINIEKQL…EQMRPWVPLQ (228 aa)). Residue 31-38 (GRSGAGKT) coordinates ATP. The region spanning 289-356 (RSSIRNVLKG…IKGVTMTQMD (68 aa)) is the Mop domain.

Belongs to the ABC transporter superfamily. Molybdate importer (TC 3.A.1.8) family. In terms of assembly, the complex is composed of two ATP-binding proteins (ModC), two transmembrane proteins (ModB) and a solute-binding protein (ModA).

The protein localises to the cell inner membrane. The catalysed reaction is molybdate(out) + ATP + H2O = molybdate(in) + ADP + phosphate + H(+). Its function is as follows. Part of the ABC transporter complex ModABC involved in molybdenum import. Responsible for energy coupling to the transport system. The chain is Molybdenum import ATP-binding protein ModC from Shewanella oneidensis (strain ATCC 700550 / JCM 31522 / CIP 106686 / LMG 19005 / NCIMB 14063 / MR-1).